The sequence spans 602 residues: RecBCD enzyme subunit RecD (602 aa).

Residue 174–181 (GGPGTGKT) coordinates ATP.

Belongs to the RecD family. In terms of assembly, heterotrimer of RecB, RecC and RecD. All subunits contribute to DNA-binding.

The enzyme catalyses Couples ATP hydrolysis with the unwinding of duplex DNA at the replication fork by translocating in the 5'-3' direction. This creates two antiparallel DNA single strands (ssDNA). The leading ssDNA polymer is the template for DNA polymerase III holoenzyme which synthesizes a continuous strand.. The catalysed reaction is ATP + H2O = ADP + phosphate + H(+). Its function is as follows. A helicase/nuclease that prepares dsDNA breaks (DSB) for recombinational DNA repair. Binds to DSBs and unwinds DNA via a highly rapid and processive ATP-dependent bidirectional helicase activity. Unwinds dsDNA until it encounters a Chi (crossover hotspot instigator) sequence from the 3' direction. Cuts ssDNA a few nucleotides 3' to the Chi site. The properties and activities of the enzyme are changed at Chi. The Chi-altered holoenzyme produces a long 3'-ssDNA overhang and facilitates RecA-binding to the ssDNA for homologous DNA recombination and repair. Holoenzyme degrades any linearized DNA that is unable to undergo homologous recombination. In the holoenzyme this subunit has ssDNA-dependent ATPase and 5'-3' helicase activity. When added to pre-assembled RecBC greatly stimulates nuclease activity and augments holoenzyme processivity. Negatively regulates the RecA-loading ability of RecBCD. This chain is RecBCD enzyme subunit RecD, found in Buchnera aphidicola subsp. Schizaphis graminum (strain Sg).